A 346-amino-acid polypeptide reads, in one-letter code: GTP-binding RHO-like protein (346 aa).

Over residues 1 to 10 (MTPNGSRRHS) the composition is skewed to basic residues. Positions 1–25 (MTPNGSRRHSAYMGSPRSQHSSTME) are disordered. Residues 16–25 (PRSQHSSTME) are compositionally biased toward polar residues. Residue 82–89 (GDGGCGKT) participates in GTP binding. The short motif at 104–112 (YVPTVFENY) is the Effector region element. Residues 130-134 (DTAGQ) and 188-191 (TKSD) each bind GTP. Positions 259–294 (LGGSNGGSGNHSRHHSRNYSNVSNNRRGHLKNTSYD) are disordered. Cys-343 carries the cysteine methyl ester modification. Cys-343 is lipidated: S-geranylgeranyl cysteine. The propeptide at 344–346 (VIL) is removed in mature form.

Belongs to the small GTPase superfamily. Rho family.

It localises to the cell membrane. In Candida albicans (strain WO-1) (Yeast), this protein is GTP-binding RHO-like protein (CRL1).